Consider the following 419-residue polypeptide: Zinc finger CCCH domain-containing protein 62 (419 aa).

A C3H1-type zinc finger spans residues 89 to 116 (SLRKWVCKYWKDGKCKRGEQCQFLHSWS). WD repeat units lie at residues 129-168 (GHNK…CVHS), 210-247 (GVVG…ESDP), 256-293 (GHSG…CIMT), 296-335 (QHTG…KVVQ), and 383-419 (FSTH…GNKV).

In Arabidopsis thaliana (Mouse-ear cress), this protein is Zinc finger CCCH domain-containing protein 62 (ZFWD4).